A 430-amino-acid polypeptide reads, in one-letter code: Glutamate-1-semialdehyde 2,1-aminomutase (430 aa).

An N6-(pyridoxal phosphate)lysine modification is found at Lys267.

This sequence belongs to the class-III pyridoxal-phosphate-dependent aminotransferase family. HemL subfamily. In terms of assembly, homodimer. The cofactor is pyridoxal 5'-phosphate.

The protein localises to the cytoplasm. It carries out the reaction (S)-4-amino-5-oxopentanoate = 5-aminolevulinate. The protein operates within porphyrin-containing compound metabolism; protoporphyrin-IX biosynthesis; 5-aminolevulinate from L-glutamyl-tRNA(Glu): step 2/2. This Lawsonia intracellularis (strain PHE/MN1-00) protein is Glutamate-1-semialdehyde 2,1-aminomutase.